A 141-amino-acid polypeptide reads, in one-letter code: Large ribosomal subunit protein bL17 (141 aa).

This sequence belongs to the bacterial ribosomal protein bL17 family. As to quaternary structure, part of the 50S ribosomal subunit. Contacts protein L32.

The chain is Large ribosomal subunit protein bL17 from Agrobacterium fabrum (strain C58 / ATCC 33970) (Agrobacterium tumefaciens (strain C58)).